Consider the following 201-residue polypeptide: Holliday junction branch migration complex subunit RuvA (201 aa).

The interval 1-64 (MYEYIRGQFQ…EDFIGLYGFT (64 aa)) is domain I. The tract at residues 65–143 (TKEELEMFKL…PDELTSEEEQ (79 aa)) is domain II. A flexible linker region spans residues 144-152 (LIEGINDNS). A domain III region spans residues 153-201 (DYSFNINETLSALMALGYTEKEAQKALEKVDKTLSIENMIKESLKLLMR).

It belongs to the RuvA family. Homotetramer. Forms an RuvA(8)-RuvB(12)-Holliday junction (HJ) complex. HJ DNA is sandwiched between 2 RuvA tetramers; dsDNA enters through RuvA and exits via RuvB. An RuvB hexamer assembles on each DNA strand where it exits the tetramer. Each RuvB hexamer is contacted by two RuvA subunits (via domain III) on 2 adjacent RuvB subunits; this complex drives branch migration. In the full resolvosome a probable DNA-RuvA(4)-RuvB(12)-RuvC(2) complex forms which resolves the HJ.

Its subcellular location is the cytoplasm. Its function is as follows. The RuvA-RuvB-RuvC complex processes Holliday junction (HJ) DNA during genetic recombination and DNA repair, while the RuvA-RuvB complex plays an important role in the rescue of blocked DNA replication forks via replication fork reversal (RFR). RuvA specifically binds to HJ cruciform DNA, conferring on it an open structure. The RuvB hexamer acts as an ATP-dependent pump, pulling dsDNA into and through the RuvAB complex. HJ branch migration allows RuvC to scan DNA until it finds its consensus sequence, where it cleaves and resolves the cruciform DNA. This chain is Holliday junction branch migration complex subunit RuvA, found in Clostridium perfringens (strain SM101 / Type A).